The chain runs to 199 residues: V-set and transmembrane domain-containing protein 5 (199 aa).

Positions 1–27 (MRPLRCGERTQGIPLGLLAFWVTAARC) are cleaved as a signal peptide. Residues 28-146 (LQSQGVSLYI…VSEIRYEDLH (119 aa)) lie on the Extracellular side of the membrane. One can recognise an Ig-like C2-type domain in the interval 35 to 138 (LYIPQSAINA…QSGTILLRVS (104 aa)). 3 N-linked (GlcNAc...) asparagine glycosylation sites follow: Asn-43, Asn-87, and Asn-101. The chain crosses the membrane as a helical span at residues 147–167 (FVAVFFALLAAVAVVLISLMW). At 168-199 (VCNQCAYKFQRKRRYKLKESTTEEIEMKEVEC) the chain is on the cytoplasmic side. The interval 169–185 (CNQCAYKFQRKRRYKLK) is important for CDC42-dependent filopodia induction.

As to quaternary structure, can homooligomerize through cis interactions within the same cell membrane. In terms of processing, N-glycosylated. As to expression, highly expressed in the central nervous system (CNS), with the highest expression in thalamus, hippocampus, cerebrum, midbrain and spinal cord. Also highly expressed in stomach, kidney and small intestine.

The protein resides in the cell membrane. The protein localises to the cell projection. It is found in the dendrite. Its subcellular location is the axon. Functionally, cell adhesion-like membrane protein of the central nervous system (CNS) which modulates both the position and complexity of central neurons by altering their membrane morphology and dynamics. Involved in the formation of neuronal dendrites and protrusions including dendritic filopodia. In synaptogenesis, regulates synapse formation by altering dendritic spine morphology and actin distribution. Promotes formation of unstable neuronal spines such as thin and branched types. Regulates neuronal morphogenesis and migration during cortical development in the brain. The polypeptide is V-set and transmembrane domain-containing protein 5 (Mus musculus (Mouse)).